A 206-amino-acid polypeptide reads, in one-letter code: dITP/XTP pyrophosphatase (206 aa).

7-12 provides a ligand contact to substrate; that stretch reads SCHGYK. Catalysis depends on Asp70, which acts as the Proton acceptor. Mg(2+) is bound at residue Asp70. Substrate is bound by residues Thr71, 154 to 157, Lys177, and 182 to 183; these read FGYD and HR.

The protein belongs to the HAM1 NTPase family. In terms of assembly, homodimer. Mg(2+) serves as cofactor.

The catalysed reaction is XTP + H2O = XMP + diphosphate + H(+). It catalyses the reaction dITP + H2O = dIMP + diphosphate + H(+). It carries out the reaction ITP + H2O = IMP + diphosphate + H(+). Pyrophosphatase that catalyzes the hydrolysis of nucleoside triphosphates to their monophosphate derivatives, with a high preference for the non-canonical purine nucleotides XTP (xanthosine triphosphate), dITP (deoxyinosine triphosphate) and ITP. Seems to function as a house-cleaning enzyme that removes non-canonical purine nucleotides from the nucleotide pool, thus preventing their incorporation into DNA/RNA and avoiding chromosomal lesions. In Chlamydia caviae (strain ATCC VR-813 / DSM 19441 / 03DC25 / GPIC) (Chlamydophila caviae), this protein is dITP/XTP pyrophosphatase.